Consider the following 190-residue polypeptide: Putative manganese efflux pump MntP (190 aa).

6 helical membrane-spanning segments follow: residues 3–23 (PISL…AALG), 41–61 (LIFG…GQVA), 69–89 (DHWI…YNGL), 105–125 (FWIL…VGVG), 133–153 (IMVA…IGVM), and 168–188 (IVGG…HLTA).

The protein belongs to the MntP (TC 9.B.29) family.

The protein localises to the cell inner membrane. Probably functions as a manganese efflux pump. The sequence is that of Putative manganese efflux pump MntP from Pseudomonas syringae pv. tomato (strain ATCC BAA-871 / DC3000).